A 665-amino-acid polypeptide reads, in one-letter code: Protein-arginine deiminase type-2 (665 aa).

The Ca(2+) site is built by Asp123, Asp125, Asp127, Val129, Glu131, Asn154, Asp156, Glu158, Asp166, Asp169, Lys171, Asp177, Asp180, Glu354, Asp389, Phe408, Leu411, and Glu412. Cys647 (nucleophile) is an active-site residue.

It belongs to the protein arginine deiminase family. As to quaternary structure, homodimer. It depends on Ca(2+) as a cofactor. In terms of tissue distribution, detected in keratinocytes in epidermis (at protein level).

The protein resides in the cytoplasm. It carries out the reaction L-arginyl-[protein] + H2O = L-citrullyl-[protein] + NH4(+). Catalyzes the deimination of arginine residues of proteins. This Homo sapiens (Human) protein is Protein-arginine deiminase type-2 (PADI2).